A 225-amino-acid polypeptide reads, in one-letter code: Ribosome maturation factor RimM (225 aa).

In terms of domain architecture, PRC barrel spans 144-225; that stretch reads ADEFYWVDLI…RIVVDWEADY (82 aa).

It belongs to the RimM family. Binds ribosomal protein uS19.

The protein resides in the cytoplasm. Its function is as follows. An accessory protein needed during the final step in the assembly of 30S ribosomal subunit, possibly for assembly of the head region. Essential for efficient processing of 16S rRNA. May be needed both before and after RbfA during the maturation of 16S rRNA. It has affinity for free ribosomal 30S subunits but not for 70S ribosomes. The polypeptide is Ribosome maturation factor RimM (Burkholderia orbicola (strain AU 1054)).